A 151-amino-acid polypeptide reads, in one-letter code: Small ribosomal subunit protein uS15 (151 aa).

This sequence belongs to the universal ribosomal protein uS15 family.

The chain is Small ribosomal subunit protein uS15 (RPS13) from Ciona intestinalis (Transparent sea squirt).